The primary structure comprises 122 residues: Large ribosomal subunit protein uL14 (122 aa).

The protein belongs to the universal ribosomal protein uL14 family. In terms of assembly, part of the 50S ribosomal subunit. Forms a cluster with proteins L3 and L19. In the 70S ribosome, L14 and L19 interact and together make contacts with the 16S rRNA in bridges B5 and B8.

Functionally, binds to 23S rRNA. Forms part of two intersubunit bridges in the 70S ribosome. The sequence is that of Large ribosomal subunit protein uL14 from Shewanella amazonensis (strain ATCC BAA-1098 / SB2B).